The chain runs to 86 residues: Small ribosomal subunit protein bS20 (86 aa).

The segment at 1 to 27 is disordered; sequence MANNKSAKKRAIQAEKRRQHNASRRSM.

Belongs to the bacterial ribosomal protein bS20 family.

Its function is as follows. Binds directly to 16S ribosomal RNA. The sequence is that of Small ribosomal subunit protein bS20 from Vibrio cholerae serotype O1 (strain ATCC 39541 / Classical Ogawa 395 / O395).